A 606-amino-acid chain; its full sequence is Kelch repeat and BTB domain-containing protein 8 (606 aa).

Residues 55 to 123 form the BTB domain; that stretch reads TDIVVQVDHG…AYTSRVQLTE (69 aa). The BACK domain occupies 158–258; the sequence is CIGVFSFADH…PLMEETFVEQ (101 aa). Kelch repeat units lie at residues 342 to 396, 397 to 447, 449 to 487, 488 to 534, and 546 to 593; these read ELYI…HCCG, KLYA…EYKD, IYILQGEVFLCYDPPRDYWCYLTPMTAPRVQGMAAVYKD, SIYY…KLVV, and TQVS…FECA.

The protein belongs to the KBTBD8 family. Component of the BCR(KBTBD8) E3 ubiquitin ligase complex.

It is found in the cytoplasm. The protein resides in the cytoskeleton. Its subcellular location is the spindle. The protein localises to the golgi apparatus. Substrate-specific adapter of a BCR (BTB-CUL3-RBX1) E3 ubiquitin ligase complex that acts as a regulator of neural crest specification. The BCR(KBTBD8) complex acts by mediating monoubiquitination of target proteins. In Xenopus tropicalis (Western clawed frog), this protein is Kelch repeat and BTB domain-containing protein 8 (kbtbd8).